Consider the following 353-residue polypeptide: Uroporphyrinogen decarboxylase (353 aa).

Substrate is bound by residues 28–32 (RQAGR), aspartate 78, tyrosine 155, serine 210, and histidine 325.

Belongs to the uroporphyrinogen decarboxylase family. As to quaternary structure, homodimer.

It is found in the cytoplasm. The enzyme catalyses uroporphyrinogen III + 4 H(+) = coproporphyrinogen III + 4 CO2. The protein operates within porphyrin-containing compound metabolism; protoporphyrin-IX biosynthesis; coproporphyrinogen-III from 5-aminolevulinate: step 4/4. Its function is as follows. Catalyzes the decarboxylation of four acetate groups of uroporphyrinogen-III to yield coproporphyrinogen-III. The sequence is that of Uroporphyrinogen decarboxylase from Nostoc punctiforme (strain ATCC 29133 / PCC 73102).